Here is a 137-residue protein sequence, read N- to C-terminus: Sporulation-specific cell division protein SsgB (137 aa).

Belongs to the SsgA family. As to quaternary structure, interacts with SsgA. Interacts with FtsZ (via N-terminus).

The protein localises to the cell septum. Functionally, involved in sporulation-specific cell division. Required for early stages of sporulation. Important in the process of growth cessation prior to sporulation-specific cell division. Recruits cell division protein FtsZ to the future septum sites and tethers the contractile ring structure (Z ring) to the cytoplasmic membrane during sporulation. Stimulates polymerization and filament length of FtsZ in vitro. The protein is Sporulation-specific cell division protein SsgB of Streptomyces coelicolor (strain ATCC BAA-471 / A3(2) / M145).